A 434-amino-acid chain; its full sequence is Tol-Pal system protein TolB (434 aa).

Positions 1-24 are cleaved as a signal peptide; that stretch reads MKFSAYLTTLFIVLFSLFIQTVQA.

Belongs to the TolB family. The Tol-Pal system is composed of five core proteins: the inner membrane proteins TolA, TolQ and TolR, the periplasmic protein TolB and the outer membrane protein Pal. They form a network linking the inner and outer membranes and the peptidoglycan layer.

The protein resides in the periplasm. Its function is as follows. Part of the Tol-Pal system, which plays a role in outer membrane invagination during cell division and is important for maintaining outer membrane integrity. This Histophilus somni (strain 2336) (Haemophilus somnus) protein is Tol-Pal system protein TolB.